The primary structure comprises 243 residues: Carboxy-S-adenosyl-L-methionine synthase (243 aa).

S-adenosyl-L-methionine contacts are provided by residues Y40, 65–67 (GCS), 90–91 (DN), 118–119 (DI), N133, and R200.

The protein belongs to the class I-like SAM-binding methyltransferase superfamily. Cx-SAM synthase family. Homodimer.

The enzyme catalyses prephenate + S-adenosyl-L-methionine = carboxy-S-adenosyl-L-methionine + 3-phenylpyruvate + H2O. Catalyzes the conversion of S-adenosyl-L-methionine (SAM) to carboxy-S-adenosyl-L-methionine (Cx-SAM). This chain is Carboxy-S-adenosyl-L-methionine synthase, found in Shewanella halifaxensis (strain HAW-EB4).